Here is a 483-residue protein sequence, read N- to C-terminus: SWI/SNF-related matrix-associated actin-dependent regulator of chromatin subfamily D member 3 (483 aa).

An N-acetylalanine modification is found at alanine 2. Residues 26–102 form a disordered region; the sequence is VRPGMPSGAR…ARSRSAKRRK (77 aa). A compositionally biased stretch (low complexity) spans 78–87; the sequence is QSQAQSQGQP. Serine 178 is subject to Phosphoserine. An SWIB/MDM2 domain is found at 258–335; that stretch reads YQPPQFKLDP…PQRLTALLLP (78 aa).

Belongs to the SMARCD family. Component of the multiprotein chromatin-remodeling complexes SWI/SNF: SWI/SNF-A (BAF), SWI/SNF-B (PBAF) and related complexes. The canonical complex contains a catalytic subunit (either SMARCA4/BRG1/BAF190A or SMARCA2/BRM/BAF190B) and at least SMARCE1, ACTL6A/BAF53, SMARCC1/BAF155, SMARCC2/BAF170, and SMARCB1/SNF5/BAF47. Other subunits specific to each of the complexes may also be present permitting several possible combinations developmentally and tissue specific. Component of the BAF complex, which includes at least actin (ACTB), ARID1A/BAF250A, ARID1B/BAF250B, SMARCA2/BRM, SMARCA4/BRG1/BAF190A, ACTL6A/BAF53, ACTL6B/BAF53B, SMARCE1/BAF57, SMARCC1/BAF155, SMARCC2/BAF170, SMARCB1/SNF5/INI1, and one or more SMARCD1/BAF60A, SMARCD2/BAF60B, or SMARCD3/BAF60C. In muscle cells, the BAF complex also contains DPF3. Component of neural progenitors-specific chromatin remodeling complex (npBAF complex) composed of at least, ARID1A/BAF250A or ARID1B/BAF250B, SMARCD1/BAF60A, SMARCD3/BAF60C, SMARCA2/BRM/BAF190B, SMARCA4/BRG1/BAF190A, SMARCB1/BAF47, SMARCC1/BAF155, SMARCE1/BAF57, SMARCC2/BAF170, PHF10/BAF45A, ACTL6A/BAF53A and actin. Component of neuron-specific chromatin remodeling complex (nBAF complex) composed of at least, ARID1A/BAF250A or ARID1B/BAF250B, SMARCD1/BAF60A, SMARCD3/BAF60C, SMARCA2/BRM/BAF190B, SMARCA4/BRG1/BAF190A, SMARCB1/BAF47, SMARCC1/BAF155, SMARCE1/BAF57, SMARCC2/BAF170, DPF1/BAF45B, DPF3/BAF45C, ACTL6B/BAF53B and actin. May be a component of the SWI/SNF-B (PBAF) chromatin remodeling complex, at least composed of SMARCA4/BRG1, SMARCB1/BAF47/SNF5, ACTL6A/BAF53A or ACTL6B/BAF53B, SMARCE1/BAF57, SMARCD1/BAF60A, SMARCD2/BAF60B, perhaps SMARCD3/BAF60C, SMARCC1/BAF155, SMARCC2/BAF170, PBRM1/BAF180, ARID2/BAF200 and actin. Interacts with SMARCA4/BRG1/BAF190A. Component of SWI/SNF (GBAF) subcomplex, which includes at least BICRA or BICRAL (mutually exclusive), BRD9, SS18, SMARCA2/BRM, SMARCA4/BRG1/BAF190A, ACTL6A/BAF53, SMARCC1/BAF155, and SMARCD1/BAF60A. The precise distribution of the related SMARCD1, SMARCD2 and SMARCD3 proteins among these and other SWI/SNF nucleosome-remodeling complexes is not fully known. May allow recruitment of SWI/SNF containing complexes specifically to promoters where these factors are located. Also interacts with several nuclear receptors including PPARG/NR1C3, RXRA/NR1F1, ESR1, NR5A1, NR5A2/LRH1 and other transcriptional activators including the HLH protein SREBF1/SREBP1 and the homeobox protein PBX1. Interacts with PRDM1/BLIMP1. In terms of tissue distribution, isoform 2 and isoform 1 are expressed in brain, heart, kidney, placenta, prostate, salivary gland, spleen, testis, thyroid, trachea and uterus. Isoform 1 is also expressed in skeletal muscle and adipose tissue.

The protein resides in the nucleus. Functionally, involved in transcriptional activation and repression of select genes by chromatin remodeling (alteration of DNA-nucleosome topology). Component of SWI/SNF chromatin remodeling complexes that carry out key enzymatic activities, changing chromatin structure by altering DNA-histone contacts within a nucleosome in an ATP-dependent manner. Stimulates nuclear receptor mediated transcription. Belongs to the neural progenitors-specific chromatin remodeling complex (npBAF complex) and the neuron-specific chromatin remodeling complex (nBAF complex). During neural development a switch from a stem/progenitor to a postmitotic chromatin remodeling mechanism occurs as neurons exit the cell cycle and become committed to their adult state. The transition from proliferating neural stem/progenitor cells to postmitotic neurons requires a switch in subunit composition of the npBAF and nBAF complexes. As neural progenitors exit mitosis and differentiate into neurons, npBAF complexes which contain ACTL6A/BAF53A and PHF10/BAF45A, are exchanged for homologous alternative ACTL6B/BAF53B and DPF1/BAF45B or DPF3/BAF45C subunits in neuron-specific complexes (nBAF). The npBAF complex is essential for the self-renewal/proliferative capacity of the multipotent neural stem cells. The nBAF complex along with CREST plays a role regulating the activity of genes essential for dendrite growth. The sequence is that of SWI/SNF-related matrix-associated actin-dependent regulator of chromatin subfamily D member 3 (SMARCD3) from Homo sapiens (Human).